The chain runs to 580 residues: Protein O-linked-mannose beta-1,4-N-acetylglucosaminyltransferase 2 (580 aa).

Topologically, residues methionine 1–serine 4 are cytoplasmic. A helical; Signal-anchor for type II membrane protein transmembrane segment spans residues alanine 5 to leucine 25. Residues arginine 26–threonine 580 lie on the Lumenal side of the membrane. Residues asparagine 99 and asparagine 276 are each glycosylated (N-linked (GlcNAc...) asparagine). The 93-residue stretch at alanine 488 to threonine 580 folds into the Fibronectin type-III domain.

Belongs to the glycosyltransferase 61 family. In terms of tissue distribution, mainly expressed in the central nervous system.

It is found in the endoplasmic reticulum membrane. The enzyme catalyses 3-O-(alpha-D-mannosyl)-L-threonyl-[protein] + UDP-N-acetyl-alpha-D-glucosamine = 3-O-(N-acetyl-beta-D-glucosaminyl-(1-&gt;4)-alpha-D-mannosyl)-L-threonyl-[protein] + UDP + H(+). It participates in protein modification; protein glycosylation. In terms of biological role, O-linked mannose beta-1,4-N-acetylglucosaminyltransferase that transfers UDP-N-acetyl-D-glucosamine to the 4-position of the mannose to generate N-acetyl-D-glucosamine-beta-1,4-O-D-mannosylprotein. Involved in the biosynthesis of the phosphorylated O-mannosyl trisaccharide (N-acetylgalactosamine-beta-3-N-acetylglucosamine-beta-4-(phosphate-6-)mannose), a carbohydrate structure present in alpha-dystroglycan (DAG1), which is required for binding laminin G-like domain-containing extracellular proteins with high affinity. The protein is Protein O-linked-mannose beta-1,4-N-acetylglucosaminyltransferase 2 (Pomgnt2) of Mus musculus (Mouse).